Reading from the N-terminus, the 154-residue chain is Transcriptional repressor NrdR (154 aa).

A zinc finger lies at 3–34 (CPFCGNDETKVLESRQVEEGTAVRRRRECERC). The ATP-cone domain maps to 49-139 (LIVVKKDGRR…VYREFKDVQR (91 aa)).

The protein belongs to the NrdR family. Zn(2+) is required as a cofactor.

In terms of biological role, negatively regulates transcription of bacterial ribonucleotide reductase nrd genes and operons by binding to NrdR-boxes. The protein is Transcriptional repressor NrdR of Desulfitobacterium hafniense (strain DSM 10664 / DCB-2).